Here is a 318-residue protein sequence, read N- to C-terminus: NADH-ubiquinone oxidoreductase chain 1 (318 aa).

A run of 9 helical transmembrane segments spans residues 2–22, 37–57, 69–89, 100–120, 136–156, 171–191, 231–251, 253–273, and 293–313; these read FLMNILCLVIPILLAMAFLTL, PNIVGPYGLLQPIADAIKLFI, LMFTLAPTLAFTLALSLWIPM, LGVLFILALSSLAVYSILWSG, VAQTISYEVTLAIILLSIMMM, HMWLIFPLWPLAMMWFISTLA, IIMMNALTTTLFLGAFHNPLF, ELFTVNFITKTLILTMMFLWV, and FLPLTLALCMFHVSMPALSAG.

This sequence belongs to the complex I subunit 1 family. As to quaternary structure, core subunit of respiratory chain NADH dehydrogenase (Complex I) which is composed of 45 different subunits.

It is found in the mitochondrion inner membrane. The catalysed reaction is a ubiquinone + NADH + 5 H(+)(in) = a ubiquinol + NAD(+) + 4 H(+)(out). Core subunit of the mitochondrial membrane respiratory chain NADH dehydrogenase (Complex I) which catalyzes electron transfer from NADH through the respiratory chain, using ubiquinone as an electron acceptor. Essential for the catalytic activity and assembly of complex I. This is NADH-ubiquinone oxidoreductase chain 1 (MT-ND1) from Euphractus sexcinctus (Six-banded armadillo).